A 241-amino-acid chain; its full sequence is Putative lipoprotein YvcA (241 aa).

The N-terminal stretch at 1–18 (MKKIIFICFSLLLALTGG) is a signal peptide. Residue Cys19 is the site of N-palmitoyl cysteine attachment. Cys19 carries S-diacylglycerol cysteine lipidation. Residues 22-48 (NDNDKNSTNDNKTEAVKPKDMDPKDLP) are disordered. Residues 23–46 (DNDKNSTNDNKTEAVKPKDMDPKD) are compositionally biased toward basic and acidic residues.

It localises to the cell membrane. Functionally, required for complex colony architecture. The chain is Putative lipoprotein YvcA (yvcA) from Bacillus subtilis (strain 168).